The sequence spans 315 residues: GTP cyclohydrolase MptA (315 aa).

It belongs to the GTP cyclohydrolase IV family. As to quaternary structure, homodimer. Fe(2+) serves as cofactor.

The catalysed reaction is GTP + H2O = 7,8-dihydroneopterin 2',3'-cyclic phosphate + formate + diphosphate + H(+). It functions in the pathway cofactor biosynthesis; 5,6,7,8-tetrahydromethanopterin biosynthesis. Functionally, converts GTP to 7,8-dihydro-D-neopterin 2',3'-cyclic phosphate, the first intermediate in the biosynthesis of coenzyme methanopterin. The chain is GTP cyclohydrolase MptA from Methanococcus maripaludis (strain DSM 14266 / JCM 13030 / NBRC 101832 / S2 / LL).